The following is a 526-amino-acid chain: Aspartate ammonia-lyase (526 aa).

Residues 1–44 (MSKTSNKSSADSKNDAKAEDIVNGENQIATNESQSSDSAAVSER) are disordered. Over residues 10–20 (ADSKNDAKAED) the composition is skewed to basic and acidic residues. Residues 24 to 39 (GENQIATNESQSSDSA) are compositionally biased toward polar residues. Positions 155, 194, 195, 196, and 241 each coordinate L-aspartate. Residues 371-380 (GSSIMPAKVN) form an SS loop region. Residue serine 372 is the Proton acceptor of the active site. The L-aspartate site is built by serine 373 and lysine 378.

It belongs to the class-II fumarase/aspartase family. Aspartase subfamily. As to quaternary structure, homotetramer.

It catalyses the reaction L-aspartate = fumarate + NH4(+). Functionally, catalyzes the reversible conversion of L-aspartate to fumarate and ammonia. In Corynebacterium glutamicum (strain ATCC 13032 / DSM 20300 / JCM 1318 / BCRC 11384 / CCUG 27702 / LMG 3730 / NBRC 12168 / NCIMB 10025 / NRRL B-2784 / 534), this protein is Aspartate ammonia-lyase.